The sequence spans 430 residues: Asparagine--tRNA ligase (430 aa).

The protein belongs to the class-II aminoacyl-tRNA synthetase family. Homodimer.

It is found in the cytoplasm. It carries out the reaction tRNA(Asn) + L-asparagine + ATP = L-asparaginyl-tRNA(Asn) + AMP + diphosphate + H(+). The chain is Asparagine--tRNA ligase from Staphylococcus aureus (strain MSSA476).